Reading from the N-terminus, the 238-residue chain is Cell division protein A (238 aa).

In terms of assembly, interacts with CdvB.

The protein resides in the cytoplasm. It localises to the nucleoid. Its subcellular location is the cell membrane. Its function is as follows. Part of a cell division machinery. The CdvA, CdvB and CdvC proteins polymerize between segregating nucleoids and persist throughout cell division, forming a successively smaller structure during constriction. CdvA is a membrane interacting protein that recruits ESCRT-III homologs to the membrane. This Sulfolobus acidocaldarius (strain ATCC 33909 / DSM 639 / JCM 8929 / NBRC 15157 / NCIMB 11770) protein is Cell division protein A.